The sequence spans 616 residues: Dihydroxy-acid dehydratase (616 aa).

Residue aspartate 81 participates in Mg(2+) binding. Cysteine 122 contributes to the [2Fe-2S] cluster binding site. Mg(2+) contacts are provided by aspartate 123 and lysine 124. At lysine 124 the chain carries N6-carboxylysine. A [2Fe-2S] cluster-binding site is contributed by cysteine 195. Mg(2+) is bound at residue glutamate 491. Serine 517 functions as the Proton acceptor in the catalytic mechanism.

It belongs to the IlvD/Edd family. As to quaternary structure, homodimer. Requires [2Fe-2S] cluster as cofactor. The cofactor is Mg(2+).

It catalyses the reaction (2R)-2,3-dihydroxy-3-methylbutanoate = 3-methyl-2-oxobutanoate + H2O. The enzyme catalyses (2R,3R)-2,3-dihydroxy-3-methylpentanoate = (S)-3-methyl-2-oxopentanoate + H2O. It functions in the pathway amino-acid biosynthesis; L-isoleucine biosynthesis; L-isoleucine from 2-oxobutanoate: step 3/4. Its pathway is amino-acid biosynthesis; L-valine biosynthesis; L-valine from pyruvate: step 3/4. Functions in the biosynthesis of branched-chain amino acids. Catalyzes the dehydration of (2R,3R)-2,3-dihydroxy-3-methylpentanoate (2,3-dihydroxy-3-methylvalerate) into 2-oxo-3-methylpentanoate (2-oxo-3-methylvalerate) and of (2R)-2,3-dihydroxy-3-methylbutanoate (2,3-dihydroxyisovalerate) into 2-oxo-3-methylbutanoate (2-oxoisovalerate), the penultimate precursor to L-isoleucine and L-valine, respectively. This Escherichia coli O17:K52:H18 (strain UMN026 / ExPEC) protein is Dihydroxy-acid dehydratase.